A 526-amino-acid chain; its full sequence is Na(+)/H(+) antiporter NhaB (526 aa).

Helical transmembrane passes span 13–33 (FLGQ…VVNP), 98–118 (LLLI…LFVF), 133–155 (LAFC…VAVV), 208–228 (LLMH…VGEP), 244–264 (FFLR…LVCL), 309–329 (ALIG…VGLI), 355–375 (EALP…VIIE), 395–415 (LALF…VFVG), 452–472 (VATP…LAPL), and 481–501 (VWMA…CVQF).

It belongs to the NhaB Na(+)/H(+) (TC 2.A.34) antiporter family.

It is found in the cell inner membrane. The enzyme catalyses 2 Na(+)(in) + 3 H(+)(out) = 2 Na(+)(out) + 3 H(+)(in). Na(+)/H(+) antiporter that extrudes sodium in exchange for external protons. The sequence is that of Na(+)/H(+) antiporter NhaB from Serratia proteamaculans (strain 568).